The following is a 99-amino-acid chain: DNA-binding protein HU (99 aa).

Residues 63–82 form a disordered region; sequence HRKEREGRNPKTGAKMKIDA.

Belongs to the bacterial histone-like protein family. As to quaternary structure, homodimer.

Its function is as follows. Histone-like DNA-binding protein which is capable of wrapping DNA to stabilize it, and thus to prevent its denaturation under extreme environmental conditions. The protein is DNA-binding protein HU (hup) of Rickettsia prowazekii (strain Madrid E).